An 88-amino-acid polypeptide reads, in one-letter code: Large ribosomal subunit protein bL27 (88 aa).

A compositionally biased stretch (low complexity) spans 1-13; it reads MATKKSGGSSSNG. The tract at residues 1–24 is disordered; it reads MATKKSGGSSSNGRDSRGRRLGVK.

The protein belongs to the bacterial ribosomal protein bL27 family.

The polypeptide is Large ribosomal subunit protein bL27 (Ehrlichia ruminantium (strain Gardel)).